The following is a 259-amino-acid chain: Zinc import ATP-binding protein ZnuC (259 aa).

One can recognise an ABC transporter domain in the interval I11 to Q225. Position 43 to 50 (G43 to S50) interacts with ATP.

It belongs to the ABC transporter superfamily. Zinc importer (TC 3.A.1.15.5) family. The complex is composed of two ATP-binding proteins (ZnuC), two transmembrane proteins (ZnuB) and a solute-binding protein (ZnuA).

Its subcellular location is the cell inner membrane. It carries out the reaction Zn(2+)(out) + ATP(in) + H2O(in) = Zn(2+)(in) + ADP(in) + phosphate(in) + H(+)(in). In terms of biological role, part of the ABC transporter complex ZnuABC involved in zinc import. Responsible for energy coupling to the transport system. The chain is Zinc import ATP-binding protein ZnuC from Acinetobacter baylyi (strain ATCC 33305 / BD413 / ADP1).